The primary structure comprises 349 residues: Gibberellin 3-beta-dioxygenase 3 (349 aa).

In terms of domain architecture, Fe2OG dioxygenase spans 201 to 305 (SIQSFLQLNS…RVSAAYFAGP (105 aa)). Residues H226, D228, and H286 each contribute to the Fe cation site. R296 is a catalytic residue.

It belongs to the iron/ascorbate-dependent oxidoreductase family. GA3OX subfamily. It depends on L-ascorbate as a cofactor. Fe cation is required as a cofactor. Expressed in flower clusters and siliques.

It catalyses the reaction gibberellin A20 + 2-oxoglutarate + O2 = gibberellin A1 + succinate + CO2. The protein operates within plant hormone biosynthesis; gibberellin biosynthesis. In terms of biological role, converts the inactive gibberellin (GA) precursors GA9 and GA20 in the bioactives gibberellins GA4 and GA1. Involved in the production of bioactive GA for reproductive development. The protein is Gibberellin 3-beta-dioxygenase 3 (GA3OX3) of Arabidopsis thaliana (Mouse-ear cress).